The primary structure comprises 103 residues: GP16 protein (103 aa).

The chain is GP16 protein (GP16) from Orgyia pseudotsugata multicapsid polyhedrosis virus (OpMNPV).